We begin with the raw amino-acid sequence, 196 residues long: ATP-dependent Clp protease proteolytic subunit (196 aa).

Catalysis depends on Ser-101, which acts as the Nucleophile. Residue His-126 is part of the active site.

The protein belongs to the peptidase S14 family. In terms of assembly, component of the chloroplastic Clp protease core complex.

Its subcellular location is the plastid. It localises to the chloroplast stroma. The enzyme catalyses Hydrolysis of proteins to small peptides in the presence of ATP and magnesium. alpha-casein is the usual test substrate. In the absence of ATP, only oligopeptides shorter than five residues are hydrolyzed (such as succinyl-Leu-Tyr-|-NHMec, and Leu-Tyr-Leu-|-Tyr-Trp, in which cleavage of the -Tyr-|-Leu- and -Tyr-|-Trp bonds also occurs).. Its function is as follows. Cleaves peptides in various proteins in a process that requires ATP hydrolysis. Has a chymotrypsin-like activity. Plays a major role in the degradation of misfolded proteins. The chain is ATP-dependent Clp protease proteolytic subunit from Nicotiana tabacum (Common tobacco).